We begin with the raw amino-acid sequence, 613 residues long: MPDYRSKTSTQGRNMAGARALWRATGMKDEDFKKPIIAIANSFTQFVPGHVHLKDLGQLVAREIERAGGVAKEFNTIAVDDGIAMGHDGMLYSLPSREIIADAVEYMVNAHCADAIVCISNCDKITPGMLMAALRLNIPVIFVSGGPMEAGKTKLASHGLDLVDAMVIAADSSASDEKVAEYERSACPTCGSCSGMFTANSMNCLTEALGLALPGNGSTLATHADREQLFLTAGRTIVELCKRYYGENDDSVLPRSIANFKAFENAMMLDIAMGGSTNTILHLLAAAQEGEVAFDLRDIDRLSRKVPQLCKVAPNIQKYHMEDVHRAGGIFSILGSLARGGLLHTDLPTVHSRSMEEAIAKWDITQTDDEAVHTFFKAGPAGIPTQTAFSQSTRWETLDDDRENGCIRSFEHAYSQEGGLAVLYGNIALDGCVVKTAGVDESIHVFEGNAKIFESQDSAVRGILADEVKAGDIVIIRYEGPKGGPGMQEMLYPTSYLKSKGLGKACALLTDGRFSGGTSGLSIGHASPEAAAGGAIGLVRDGDKVLIDIPNRSINLQVSDEELAARRVEQDKKGWKPAEVRPRKVTTALKAYALLATSADKGAVRNKAMLEGL.

Mg(2+) is bound at residue D81. C122 contacts [2Fe-2S] cluster. D123 and K124 together coordinate Mg(2+). N6-carboxylysine is present on K124. A [2Fe-2S] cluster-binding site is contributed by C193. Residue E489 participates in Mg(2+) binding. S515 functions as the Proton acceptor in the catalytic mechanism.

This sequence belongs to the IlvD/Edd family. In terms of assembly, homodimer. [2Fe-2S] cluster is required as a cofactor. Mg(2+) serves as cofactor.

The catalysed reaction is (2R)-2,3-dihydroxy-3-methylbutanoate = 3-methyl-2-oxobutanoate + H2O. It carries out the reaction (2R,3R)-2,3-dihydroxy-3-methylpentanoate = (S)-3-methyl-2-oxopentanoate + H2O. The protein operates within amino-acid biosynthesis; L-isoleucine biosynthesis; L-isoleucine from 2-oxobutanoate: step 3/4. It participates in amino-acid biosynthesis; L-valine biosynthesis; L-valine from pyruvate: step 3/4. Functionally, functions in the biosynthesis of branched-chain amino acids. Catalyzes the dehydration of (2R,3R)-2,3-dihydroxy-3-methylpentanoate (2,3-dihydroxy-3-methylvalerate) into 2-oxo-3-methylpentanoate (2-oxo-3-methylvalerate) and of (2R)-2,3-dihydroxy-3-methylbutanoate (2,3-dihydroxyisovalerate) into 2-oxo-3-methylbutanoate (2-oxoisovalerate), the penultimate precursor to L-isoleucine and L-valine, respectively. The chain is Dihydroxy-acid dehydratase from Pseudomonas putida (strain W619).